Consider the following 434-residue polypeptide: Cytochrome P450 144 (434 aa).

Substrate contacts are provided by D124 and H128. Heme-binding residues include R132, R326, H383, and C385.

This sequence belongs to the cytochrome P450 family. In terms of assembly, monomer. Heme serves as cofactor.

This Mycobacterium tuberculosis (strain CDC 1551 / Oshkosh) protein is Cytochrome P450 144 (cyp144).